The following is a 351-amino-acid chain: sn-glycerol-3-phosphate import ATP-binding protein UgpC (351 aa).

One can recognise an ABC transporter domain in the interval 4–234 (ITLDNLVKAY…PATTFVAGFI (231 aa)). 36-43 (GPSGCGKS) is an ATP binding site.

The protein belongs to the ABC transporter superfamily. sn-glycerol-3-phosphate importer (TC 3.A.1.1.3) family. As to quaternary structure, the complex is composed of two ATP-binding proteins (UgpC), two transmembrane proteins (UgpA and UgpE) and a solute-binding protein (UgpB).

It is found in the cell inner membrane. It carries out the reaction sn-glycerol 3-phosphate(out) + ATP + H2O = sn-glycerol 3-phosphate(in) + ADP + phosphate + H(+). Part of the ABC transporter complex UgpBAEC involved in sn-glycerol-3-phosphate (G3P) import. Responsible for energy coupling to the transport system. This Ruegeria pomeroyi (strain ATCC 700808 / DSM 15171 / DSS-3) (Silicibacter pomeroyi) protein is sn-glycerol-3-phosphate import ATP-binding protein UgpC.